The primary structure comprises 382 residues: Flavin-dependent monooxygenase, oxygenase subunit HsaA (382 aa).

FMN contacts are provided by residues tryptophan 72, 106–108 (SSY), 129–131 (WSS), arginine 251, 334–335 (AT), and 356–357 (HA).

Belongs to the HpaH/HsaA monooxygenase family. In terms of assembly, homotetramer. HsaAB monooxygenase consists of an oxygenase component HsaA and a reductase component HsaB.

It carries out the reaction 3-hydroxy-9,10-secoandrosta-1,3,5(10)-triene-9,17-dione + FMNH2 + O2 = 3,4-dihydroxy-9,10-secoandrosta-1,3,5(10)-triene-9,17-dione + FMN + H2O + H(+). It participates in lipid metabolism; steroid biosynthesis. Functionally, catalyzes the o-hydroxylation of 3-hydroxy-9,10-secoandrosta-1,3,5(10)-triene-9,17-dione (3-HSA) to 3,4-dihydroxy-9,10-secoandrosta-1,3,5(10)-triene-9,17-dione (3,4-DHSA) in the catabolism of cholesterol. In Rhodococcus jostii (strain RHA1), this protein is Flavin-dependent monooxygenase, oxygenase subunit HsaA (hsaA).